The sequence spans 52 residues: Large ribosomal subunit protein bL33 (52 aa).

Belongs to the bacterial ribosomal protein bL33 family.

The protein is Large ribosomal subunit protein bL33 of Campylobacter jejuni subsp. jejuni serotype O:6 (strain 81116 / NCTC 11828).